The following is a 92-amino-acid chain: Small ribosomal subunit protein uS19c (92 aa).

The protein belongs to the universal ribosomal protein uS19 family.

Its subcellular location is the plastid. It is found in the chloroplast. In terms of biological role, protein S19 forms a complex with S13 that binds strongly to the 16S ribosomal RNA. This chain is Small ribosomal subunit protein uS19c, found in Cicer arietinum (Chickpea).